The primary structure comprises 293 residues: Elongation factor Ts (293 aa).

The involved in Mg(2+) ion dislocation from EF-Tu stretch occupies residues 80 to 83; the sequence is TDFV.

This sequence belongs to the EF-Ts family.

The protein resides in the cytoplasm. Functionally, associates with the EF-Tu.GDP complex and induces the exchange of GDP to GTP. It remains bound to the aminoacyl-tRNA.EF-Tu.GTP complex up to the GTP hydrolysis stage on the ribosome. In Aeromonas salmonicida (strain A449), this protein is Elongation factor Ts.